The primary structure comprises 116 residues: U11-theraphotoxin-Hhn1b (116 aa).

An N-terminal signal peptide occupies residues Met1–Ala21. Residues Asp22–Arg74 constitute a propeptide that is removed on maturation. The tract at residues Glu61–Asp83 is disordered. Cystine bridges form between Cys75/Cys90, Cys82/Cys95, and Cys89/Cys110.

The protein belongs to the neurotoxin 14 (magi-1) family. 01 (HNTX-16) subfamily. In terms of tissue distribution, expressed by the venom gland.

It is found in the secreted. Probable ion channel inhibitor. In Cyriopagopus hainanus (Chinese bird spider), this protein is U11-theraphotoxin-Hhn1b.